The sequence spans 192 residues: Ribonuclease HII (192 aa).

Residues 2 to 187 (KNLCGIDEAG…KALGENEIGV (186 aa)) form the RNase H type-2 domain. The a divalent metal cation site is built by Asp-8, Glu-9, and Asp-97.

It belongs to the RNase HII family. It depends on Mn(2+) as a cofactor. Mg(2+) serves as cofactor.

The protein resides in the cytoplasm. The catalysed reaction is Endonucleolytic cleavage to 5'-phosphomonoester.. Endonuclease that specifically degrades the RNA of RNA-DNA hybrids. The chain is Ribonuclease HII from Aliarcobacter butzleri (strain RM4018) (Arcobacter butzleri).